The chain runs to 353 residues: UPF0283 membrane protein YcjF (353 aa).

Positions 1–19 (MSEPLKPRIDFAEPLKEES) are enriched in basic and acidic residues. Positions 1–29 (MSEPLKPRIDFAEPLKEESTSTFKAQQTF) are disordered. The segment covering 20–29 (TSTFKAQQTF) has biased composition (polar residues). Helical transmembrane passes span 70-90 (MVLGGLALFGASVVGQGIQWT), 100-120 (AALGGCAAGALIIGAGVGSVI), and 213-233 (ESTLMIAVSPLALVDMAFIAW).

Belongs to the UPF0283 family.

The protein resides in the cell inner membrane. The protein is UPF0283 membrane protein YcjF of Salmonella arizonae (strain ATCC BAA-731 / CDC346-86 / RSK2980).